The following is a 300-amino-acid chain: tRNA pseudouridine synthase B (300 aa).

The active-site Nucleophile is the Asp-38.

This sequence belongs to the pseudouridine synthase TruB family. Type 1 subfamily.

It carries out the reaction uridine(55) in tRNA = pseudouridine(55) in tRNA. In terms of biological role, responsible for synthesis of pseudouridine from uracil-55 in the psi GC loop of transfer RNAs. This is tRNA pseudouridine synthase B from Dehalococcoides mccartyi (strain ATCC BAA-2266 / KCTC 15142 / 195) (Dehalococcoides ethenogenes (strain 195)).